The primary structure comprises 530 residues: Bifunctional purine biosynthesis protein PurH (530 aa).

Positions 1-148 (MNNARPIRRA…KNHKDVTIVV (148 aa)) constitute an MGS-like domain.

It belongs to the PurH family.

It catalyses the reaction (6R)-10-formyltetrahydrofolate + 5-amino-1-(5-phospho-beta-D-ribosyl)imidazole-4-carboxamide = 5-formamido-1-(5-phospho-D-ribosyl)imidazole-4-carboxamide + (6S)-5,6,7,8-tetrahydrofolate. The enzyme catalyses IMP + H2O = 5-formamido-1-(5-phospho-D-ribosyl)imidazole-4-carboxamide. It functions in the pathway purine metabolism; IMP biosynthesis via de novo pathway; 5-formamido-1-(5-phospho-D-ribosyl)imidazole-4-carboxamide from 5-amino-1-(5-phospho-D-ribosyl)imidazole-4-carboxamide (10-formyl THF route): step 1/1. It participates in purine metabolism; IMP biosynthesis via de novo pathway; IMP from 5-formamido-1-(5-phospho-D-ribosyl)imidazole-4-carboxamide: step 1/1. The chain is Bifunctional purine biosynthesis protein PurH from Vibrio parahaemolyticus serotype O3:K6 (strain RIMD 2210633).